The chain runs to 479 residues: 3-isopropylmalate dehydratase large subunit (479 aa).

[4Fe-4S] cluster is bound by residues Cys353, Cys414, and Cys417.

It belongs to the aconitase/IPM isomerase family. LeuC type 1 subfamily. In terms of assembly, heterodimer of LeuC and LeuD. It depends on [4Fe-4S] cluster as a cofactor.

The catalysed reaction is (2R,3S)-3-isopropylmalate = (2S)-2-isopropylmalate. It functions in the pathway amino-acid biosynthesis; L-leucine biosynthesis; L-leucine from 3-methyl-2-oxobutanoate: step 2/4. In terms of biological role, catalyzes the isomerization between 2-isopropylmalate and 3-isopropylmalate, via the formation of 2-isopropylmaleate. This is 3-isopropylmalate dehydratase large subunit from Xanthomonas campestris pv. campestris (strain 8004).